The primary structure comprises 543 residues: Chaperonin GroEL (543 aa).

Residues 29–32 (TLGP), 86–90 (DGTTT), Gly413, 476–478 (NAA), and Asp492 contribute to the ATP site.

Belongs to the chaperonin (HSP60) family. As to quaternary structure, forms a cylinder of 14 subunits composed of two heptameric rings stacked back-to-back. Interacts with the co-chaperonin GroES.

It is found in the cytoplasm. It carries out the reaction ATP + H2O + a folded polypeptide = ADP + phosphate + an unfolded polypeptide.. Its function is as follows. Together with its co-chaperonin GroES, plays an essential role in assisting protein folding. The GroEL-GroES system forms a nano-cage that allows encapsulation of the non-native substrate proteins and provides a physical environment optimized to promote and accelerate protein folding. This Streptococcus pyogenes serotype M18 (strain MGAS8232) protein is Chaperonin GroEL.